The chain runs to 150 residues: Large ribosomal subunit protein bL9 (150 aa).

The protein belongs to the bacterial ribosomal protein bL9 family.

In terms of biological role, binds to the 23S rRNA. This Mycoplasmopsis pulmonis (strain UAB CTIP) (Mycoplasma pulmonis) protein is Large ribosomal subunit protein bL9.